A 287-amino-acid polypeptide reads, in one-letter code: Putative S-adenosyl-L-methionine-dependent methyltransferase SACE_1742 (287 aa).

Residues aspartate 119 and 148 to 149 contribute to the S-adenosyl-L-methionine site; that span reads DL.

It belongs to the UPF0677 family.

Functionally, exhibits S-adenosyl-L-methionine-dependent methyltransferase activity. The polypeptide is Putative S-adenosyl-L-methionine-dependent methyltransferase SACE_1742 (Saccharopolyspora erythraea (strain ATCC 11635 / DSM 40517 / JCM 4748 / NBRC 13426 / NCIMB 8594 / NRRL 2338)).